The primary structure comprises 143 residues: UPF0201 protein Pars_1985 (143 aa).

This sequence belongs to the UPF0201 family.

In Pyrobaculum arsenaticum (strain DSM 13514 / JCM 11321 / PZ6), this protein is UPF0201 protein Pars_1985.